We begin with the raw amino-acid sequence, 671 residues long: Arginine--tRNA ligase (671 aa).

Positions 124 to 134 (PNVAKPMHVGH) match the 'HIGH' region motif. A disordered region spans residues 223-254 (KSDAKTAKEVSDQSESDENLKPKDKKKLRKNA). Over residues 224–233 (SDAKTAKEVS) the composition is skewed to basic and acidic residues.

Belongs to the class-I aminoacyl-tRNA synthetase family. In terms of assembly, monomer.

The protein localises to the cytoplasm. The catalysed reaction is tRNA(Arg) + L-arginine + ATP = L-arginyl-tRNA(Arg) + AMP + diphosphate. The chain is Arginine--tRNA ligase from Rhodopirellula baltica (strain DSM 10527 / NCIMB 13988 / SH1).